A 1702-amino-acid chain; its full sequence is DNA polymerase (1702 aa).

DOD-type homing endonuclease domains are found at residues 776–909 (LLGY…SLGI) and 1229–1368 (LVGL…IVGI).

The protein belongs to the DNA polymerase type-B family. In terms of processing, this protein undergoes a protein self splicing that involves a post-translational excision of the two intervening regions (inteins) followed by peptide ligation.

It carries out the reaction DNA(n) + a 2'-deoxyribonucleoside 5'-triphosphate = DNA(n+1) + diphosphate. In addition to polymerase activity, this DNA polymerase exhibits 3' to 5' exonuclease activity. In terms of biological role, intein encoded endonucleases are thought to mediate intein mobility by site-specific recombination initiated by endonuclease cleavage at the 'homing site' in gene that lack the intein. The protein is DNA polymerase (pol) of Thermococcus litoralis.